Consider the following 272-residue polypeptide: Putative hydro-lyase Rpal_1947 (272 aa).

Belongs to the D-glutamate cyclase family.

This chain is Putative hydro-lyase Rpal_1947, found in Rhodopseudomonas palustris (strain TIE-1).